Here is a 385-residue protein sequence, read N- to C-terminus: Effector protein hopAB3 (385 aa).

Disordered regions lie at residues methionine 1–proline 61, threonine 73–tyrosine 139, and alanine 215–asparagine 293. The host recognition stretch occupies residues methionine 1 to leucine 333. Low complexity predominate over residues serine 217–arginine 234. Polar residues-rich tracts occupy residues alanine 245–serine 256 and methionine 265–arginine 283.

It belongs to the HopAB family. As to quaternary structure, interacts physically with plant cell Pto.

The protein localises to the secreted. Effector protein involved in gene-for-gene resistance in tomato plants. It is recognized by the host Pto resistance protein and elicits Pto and Prf-dependent hypersensitive response (HR) and programmed cell death (PCD), resulting in host immunity. In susceptible plants, promotes virulence, in part, by enhancing the development of disease symptoms and bacterial growth. The polypeptide is Effector protein hopAB3 (hopAB3) (Pseudomonas syringae pv. maculicola).